A 343-amino-acid chain; its full sequence is N-acetyl-gamma-glutamyl-phosphate reductase (343 aa).

Cys-147 is a catalytic residue.

The protein belongs to the NAGSA dehydrogenase family. Type 1 subfamily.

It localises to the cytoplasm. It carries out the reaction N-acetyl-L-glutamate 5-semialdehyde + phosphate + NADP(+) = N-acetyl-L-glutamyl 5-phosphate + NADPH + H(+). Its pathway is amino-acid biosynthesis; L-arginine biosynthesis; N(2)-acetyl-L-ornithine from L-glutamate: step 3/4. Its function is as follows. Catalyzes the NADPH-dependent reduction of N-acetyl-5-glutamyl phosphate to yield N-acetyl-L-glutamate 5-semialdehyde. In Listeria monocytogenes serotype 4b (strain CLIP80459), this protein is N-acetyl-gamma-glutamyl-phosphate reductase.